The primary structure comprises 646 residues: DEAD-box ATP-dependent RNA helicase 52 (646 aa).

Disordered regions lie at residues 1-64 (MSSN…ANSG) and 76-117 (GSGY…PAVN). Serine 2 is modified (N-acetylserine). 2 stretches are compositionally biased toward gly residues: residues 54–64 (DRGGYGGANSG) and 76–87 (GSGYGGRGGPVG). Residues 146 to 174 (NTFAEIDLGEALNLNIQRCKYVKPTPVQR) carry the Q motif motif. The region spanning 177 to 361 (IPILAAGRDL…SDFLSNYIFL (185 aa)) is the Helicase ATP-binding domain. 190–197 (AQTGSGKT) is a binding site for ATP. The short motif at 305-308 (DEAD) is the DEAD box element. The Helicase C-terminal domain maps to 388–539 (HLMDLLHAQR…EVPDWLTRYA (152 aa)).

It belongs to the DEAD box helicase family. DDX3/DED1 subfamily.

It carries out the reaction ATP + H2O = ADP + phosphate + H(+). This Arabidopsis thaliana (Mouse-ear cress) protein is DEAD-box ATP-dependent RNA helicase 52 (RH52).